The following is a 68-amino-acid chain: Large ribosomal subunit protein uL29 (68 aa).

The protein belongs to the universal ribosomal protein uL29 family.

The polypeptide is Large ribosomal subunit protein uL29 (rpl29) (Archaeoglobus fulgidus (strain ATCC 49558 / DSM 4304 / JCM 9628 / NBRC 100126 / VC-16)).